The following is a 299-amino-acid chain: MANFPASLLILNGKSADNQPLREAITLLRDEGIQIHVRVTWEKGDAQRYVDEARRLGVETVIAGGGDGTINEVSTALILIRDGVAPALGLLPLGTANDFATSAGIPEALDKALKLAIAGNAMEIDMARVNDKTCFINMATGGFGTRITTETPEKLKAALGGVSYLIHGLMRMDTLTPDRCEIRGENFHWQGDALVIGIGNGRQAGGGQQLCPTALINDGLLQLRIFTGEELLPALFSTLTQSDDNPNIIDGASAWFDIHAPHEITFNLDGEPLSGQEFHIEVLPGALRCRLPPDCPLLR.

Residues 2 to 133 (ANFPASLLIL…IDMARVNDKT (132 aa)) enclose the DAGKc domain. ATP-binding positions include Thr-40, 66 to 72 (GDGTINE), and Thr-95. 3 residues coordinate Mg(2+): Leu-215, Asp-218, and Leu-220. Glu-271 (proton acceptor) is an active-site residue.

The protein belongs to the diacylglycerol/lipid kinase family. YegS lipid kinase subfamily. It depends on Mg(2+) as a cofactor. Ca(2+) is required as a cofactor.

Its subcellular location is the cytoplasm. In terms of biological role, probably phosphorylates lipids; the in vivo substrate is unknown. This chain is Probable lipid kinase YegS, found in Salmonella newport (strain SL254).